A 107-amino-acid chain; its full sequence is Thioredoxin (107 aa).

One can recognise a Thioredoxin domain in the interval 2–107; sequence SVSQVTDASF…LASTLNKYIS (106 aa). Active-site nucleophile residues include cysteine 31 and cysteine 34. The cysteines at positions 31 and 34 are disulfide-linked.

It belongs to the thioredoxin family.

Its subcellular location is the plastid. The protein resides in the chloroplast. Its function is as follows. Participates in various redox reactions through the reversible oxidation of its active center dithiol to a disulfide and catalyzes dithiol-disulfide exchange reactions. The protein is Thioredoxin (trxA) of Pyropia yezoensis (Susabi-nori).